A 192-amino-acid chain; its full sequence is MKDVSKNQEENISDTALTNELIHLLGHSRHDWMNKLQLIKGNLSLQKYDRVFEMIEEMVIDAKHESKLSNLKTPHLAFDFLTFNWKTHYMTLEYEVLGEIKDLSAYDQKLAKLMRKLFHLFDQAVSRESENHLTVSLQTDHPDRQLILYLDFHGAFADPSAFDDIRQNGYEDVDIMRFEITSHECLIEIGLD.

Residue His-30 is modified to Phosphohistidine.

As to quaternary structure, homodimer. Dimerization is essential for activity as both monomers contribute to the formation of the active site. Post-translationally, phosphorylated by spo0F.

It is found in the cytoplasm. Functionally, key element in the phosphorelay regulating sporulation initiation. Acts on spo0A. Mediates reversible phosphoryl transfer from spo0F to spo0A. The protein is Sporulation initiation phosphotransferase B (spo0B) of Bacillus subtilis (strain 168).